A 347-amino-acid chain; its full sequence is Anthranilate phosphoribosyltransferase (347 aa).

Residues Gly-88, Gly-91–Asp-92, Thr-96, Asn-98–Thr-101, Lys-116–Ser-124, and Ser-128 contribute to the 5-phospho-alpha-D-ribose 1-diphosphate site. Residue Gly-88 participates in anthranilate binding. Residue Ser-100 participates in Mg(2+) binding. Position 119 (Asn-119) interacts with anthranilate. Residue Arg-174 participates in anthranilate binding. Residues Asp-232 and Glu-233 each coordinate Mg(2+).

Belongs to the anthranilate phosphoribosyltransferase family. In terms of assembly, homodimer. The cofactor is Mg(2+).

The catalysed reaction is N-(5-phospho-beta-D-ribosyl)anthranilate + diphosphate = 5-phospho-alpha-D-ribose 1-diphosphate + anthranilate. Its pathway is amino-acid biosynthesis; L-tryptophan biosynthesis; L-tryptophan from chorismate: step 2/5. Functionally, catalyzes the transfer of the phosphoribosyl group of 5-phosphorylribose-1-pyrophosphate (PRPP) to anthranilate to yield N-(5'-phosphoribosyl)-anthranilate (PRA). The sequence is that of Anthranilate phosphoribosyltransferase from Shewanella sp. (strain ANA-3).